Reading from the N-terminus, the 237-residue chain is Class B acid phosphatase (237 aa).

The first 23 residues, M1–A23, serve as a signal peptide directing secretion. D69 functions as the Nucleophile in the catalytic mechanism. D69 and D71 together coordinate Mg(2+). The active-site Proton donor is D71. Residues T137–G138 and K177 each bind substrate. A Mg(2+)-binding site is contributed by D192.

Belongs to the class B bacterial acid phosphatase family. Homotetramer. Mg(2+) serves as cofactor.

It localises to the periplasm. It catalyses the reaction a phosphate monoester + H2O = an alcohol + phosphate. Functionally, dephosphorylates several organic phosphate monoesters. Also has a phosphotransferase activity catalyzing the transfer of low-energy phosphate groups from organic phosphate monoesters to free hydroxyl groups of various organic compounds. The chain is Class B acid phosphatase from Proteus mirabilis (strain HI4320).